A 256-amino-acid polypeptide reads, in one-letter code: Protein FixA (256 aa).

This sequence belongs to the ETF beta-subunit/FixA family. In terms of assembly, heterodimer of FixA and FixB.

It participates in amine and polyamine metabolism; carnitine metabolism. Required for anaerobic carnitine reduction. May bring reductant to CaiA. This Salmonella dublin (strain CT_02021853) protein is Protein FixA.